Consider the following 743-residue polypeptide: MSCRQSSSSFWSSSSSCGGGGGRGGSGGSMRSSFSRSSRAGGGGGGRFNSSSGFSGGGFSACGGGGGGSFGSSYGGGYGGGFSTGSYSGMFGGGSGGGFGGGSGGGFGGGSGGGFGGGSGGGEGGILNTNEKIVMQNLNSRLASYMEKVLELEESNTAMEKQIQDWYSKRGPKVFQKDNTHYYDTIEDLKDRIVDLTVRNNKTLVDIDNTRMTMDDFRVKLEMEQSLRQGVEGDINGLKKVLDDLVMAKSDLEILLDSLEDEKNALTKNHKEEMSQLTGQNDGDVNVEINVAPSTDLTRVLNDMREEYEQLISKNRQDIEQHYESKMTQIEQQMTNSGQEMESNMKQVSQLQHTIQELNVELQTQLTTKSALEKALEDTKNRYCGQLQQIQEQISELEAQLAEIRAETECQSQEYSILLSIKTRLEKEIETYRELLEGGQQDFESSGAGQIGFGSGKGRQRGSGGSYGGGSGGSYGGGSGGSYGGGSGGSYGGGSGGSYGGGSGGSHGGKSGGSHGGGSGGSYGGESGGSHGGGSGGSYGGGSGGSHGGKSGGGYGGGSSSGGGSGGSYGGGSGGSHGGGSGGSYGGGSGGSHGGKSGGGYGGGSSSGGGSGGSYGGGSGGSHGGKSGGSYGGGSGGSYGGGSGGSHGGKSGGGYGGGSSSGGGSGGSYGGGSGGSHGGKSGGSYGGGSSSGGGSGGSYGGGSGSGGGSGGSYGGGNRRPSQSQSSSKSADCDDDSQEHKMRY.

The segment covering 1–16 (MSCRQSSSSFWSSSSS) has biased composition (low complexity). Positions 1 to 46 (MSCRQSSSSFWSSSSSCGGGGGRGGSGGSMRSSFSRSSRAGGGGGG) are disordered. Residues 1–130 (MSCRQSSSSF…GGEGGILNTN (130 aa)) form a head region. 2 positions are modified to phosphoserine: serine 14 and serine 16. The segment covering 17–28 (CGGGGGRGGSGG) has biased composition (gly residues). A compositionally biased stretch (low complexity) spans 29–39 (SMRSSFSRSSR). 2 positions are modified to phosphoserine: serine 55 and serine 155. Residues 131-166 (EKIVMQNLNSRLASYMEKVLELEESNTAMEKQIQDW) are coil 1A. Residues 131 to 443 (EKIVMQNLNS…ELLEGGQQDF (313 aa)) enclose the IF rod domain. Residues 167 to 185 (YSKRGPKVFQKDNTHYYDT) are linker 1. Residues 186 to 277 (IEDLKDRIVD…KNHKEEMSQL (92 aa)) form a coil 1B region. Positions 278 to 300 (TGQNDGDVNVEINVAPSTDLTRV) are linker 12. The coil 2 stretch occupies residues 301-439 (LNDMREEYEQ…ETYRELLEGG (139 aa)). Disordered stretches follow at residues 440-468 (QQDF…GSYG) and 501-743 (GGSG…KMRY). The interval 440 to 709 (QQDFESSGAG…GGGSGSGGGS (270 aa)) is tail. Composition is skewed to gly residues over residues 449–468 (GQIG…GSYG) and 501–717 (GGSG…GGGN).

It belongs to the intermediate filament family. In terms of assembly, heterotetramer of two type I and two type II keratins. In terms of tissue distribution, expressed in footpad epidermis and testis (at protein level).

Its function is as follows. May serve an important special function either in the mature palmar and plantar skin tissue or in the morphogenetic program of the formation of these tissues. Plays a role in keratin filament assembly. Plays an essential role in the correct development of sperm. The sequence is that of Keratin, type I cytoskeletal 9 from Mus musculus (Mouse).